The primary structure comprises 435 residues: Tol-Pal system protein TolB (435 aa).

Residues 1-28 (MTKCSFFRAILVAVGLMTAAVFATPANA) form the signal peptide. The disordered stretch occupies residues 288–310 (STAAIDTSPSYSPDGARVSFESD).

The protein belongs to the TolB family. In terms of assembly, the Tol-Pal system is composed of five core proteins: the inner membrane proteins TolA, TolQ and TolR, the periplasmic protein TolB and the outer membrane protein Pal. They form a network linking the inner and outer membranes and the peptidoglycan layer.

Its subcellular location is the periplasm. In terms of biological role, part of the Tol-Pal system, which plays a role in outer membrane invagination during cell division and is important for maintaining outer membrane integrity. In Rhizobium johnstonii (strain DSM 114642 / LMG 32736 / 3841) (Rhizobium leguminosarum bv. viciae), this protein is Tol-Pal system protein TolB.